The chain runs to 311 residues: Thioredoxin reductase (311 aa).

FAD is bound at residue 35–42; the sequence is ERGIPGGQ. Cysteine 134 and cysteine 137 are oxidised to a cystine. Position 277–286 (277–286) interacts with FAD; it reads DVRDKGLRQI.

This sequence belongs to the class-II pyridine nucleotide-disulfide oxidoreductase family. In terms of assembly, homodimer. The cofactor is FAD.

It localises to the cytoplasm. It catalyses the reaction [thioredoxin]-dithiol + NADP(+) = [thioredoxin]-disulfide + NADPH + H(+). The protein is Thioredoxin reductase (trxB) of Staphylococcus aureus (strain MRSA252).